The following is a 1044-amino-acid chain: Phosphatidylinositol 4,5-bisphosphate 3-kinase catalytic subunit delta isoform (1044 aa).

Residues 16 to 105 form the PI3K-ABD domain; it reads ENQSVVVDFL…LPVLRLVARE (90 aa). The PI3K-RBD domain maps to 187–278; the sequence is NRALLVNVKF…GLTPHLTMVH (92 aa). The segment at 287 to 312 is disordered; sequence DEQSNPAPQVQKPRAKPPPIPAKKPS. Positions 319 to 476 constitute a C2 PI3K-type domain; it reads LEQPFRIELI…SAAALLICLP (158 aa). Residues 497 to 674 form the PIK helical domain; sequence HSECVHVTEE…GLILEAYCRG (178 aa). Position 524 is a phosphotyrosine (Tyr524). The PI3K/PI4K catalytic domain maps to 745–1027; sequence CVEQCTFMDS…KFNEALRESW (283 aa). A G-loop region spans residues 751-757; the sequence is FMDSKMK. Residues 890 to 898 form a catalytic loop region; sequence GIGDRHSDN. Residues 909–935 form an activation loop region; that stretch reads HIDFGHFLGNFKTKFGINRERVPFILT. Ser1039 carries the phosphoserine; by autocatalysis modification.

This sequence belongs to the PI3/PI4-kinase family. As to quaternary structure, heterodimer of a catalytic subunit PIK3CD and a p85 regulatory subunit (PIK3R1, PIK3R2 or PIK3R3). Interacts with ERAS. Interacts with HRAS. Post-translationally, autophosphorylation on Ser-1039 results in the almost complete inactivation of the lipid kinase activity. As to expression, in humans, the highest levels of expression are seen in peripheral blood mononuclear cells, spleen, and thymus, and low levels of expression in testes, uterus, colon, and small intestine but not in other tissues examined including prostate, heart, brain, and liver. Isoform 2 is expressed in normal thymus, lung and spleen tissues, and is detected at low levels in normal lysates from colon and ovarian biopsies, at elevated levels in lysates from colorectal tumors and is abundantly expressed in some ovarian tumors (at protein level). Both isoform 1 and isoform 2 are widely expressed. Isoform 1 is expressed predominantly in leukocytes.

The protein localises to the cytoplasm. It catalyses the reaction a 1,2-diacyl-sn-glycero-3-phospho-(1D-myo-inositol-4,5-bisphosphate) + ATP = a 1,2-diacyl-sn-glycero-3-phospho-(1D-myo-inositol-3,4,5-trisphosphate) + ADP + H(+). The catalysed reaction is a 1,2-diacyl-sn-glycero-3-phospho-(1D-myo-inositol) + ATP = a 1,2-diacyl-sn-glycero-3-phospho-(1D-myo-inositol-3-phosphate) + ADP + H(+). The enzyme catalyses 1-octadecanoyl-2-(5Z,8Z,11Z,14Z)-eicosatetraenoyl-sn-glycero-3-phospho-1D-myo-inositol 4,5-bisphosphate + ATP = 1-octadecanoyl-2-(5Z,8Z,11Z,14Z-eicosatetraenoyl)-sn-glycero-3-phospho-(1D-myo-inositol 3,4,5-triphosphate) + ADP + H(+). It functions in the pathway phospholipid metabolism; phosphatidylinositol phosphate biosynthesis. Its activity is regulated as follows. Activated by growth factors and cytokine receptors through a tyrosine-kinase-dependent mechanism. Activated by RAS. IC87114 inhibits lipid kinase activity and is selective in cells at doses up to 5-10 uM. IC87114 blocks T-cell receptor signaling in naive and memory T-cells and reduces cytokine production by memory T-cells. Functionally, phosphoinositide-3-kinase (PI3K) phosphorylates phosphatidylinositol (PI) and its phosphorylated derivatives at position 3 of the inositol ring to produce 3-phosphoinositides. Uses ATP and PtdIns(4,5)P2 (phosphatidylinositol 4,5-bisphosphate) to generate phosphatidylinositol 3,4,5-trisphosphate (PIP3). PIP3 plays a key role by recruiting PH domain-containing proteins to the membrane, including AKT1 and PDPK1, activating signaling cascades involved in cell growth, survival, proliferation, motility and morphology. Mediates immune responses. Plays a role in B-cell development, proliferation, migration, and function. Required for B-cell receptor (BCR) signaling. Mediates B-cell proliferation response to anti-IgM, anti-CD40 and IL4 stimulation. Promotes cytokine production in response to TLR4 and TLR9. Required for antibody class switch mediated by TLR9. Involved in the antigen presentation function of B-cells. Involved in B-cell chemotaxis in response to CXCL13 and sphingosine 1-phosphate (S1P). Required for proliferation, signaling and cytokine production of naive, effector and memory T-cells. Required for T-cell receptor (TCR) signaling. Mediates TCR signaling events at the immune synapse. Activation by TCR leads to antigen-dependent memory T-cell migration and retention to antigenic tissues. Together with PIK3CG participates in T-cell development. Contributes to T-helper cell expansion and differentiation. Required for T-cell migration mediated by homing receptors SELL/CD62L, CCR7 and S1PR1 and antigen dependent recruitment of T-cells. Together with PIK3CG is involved in natural killer (NK) cell development and migration towards the sites of inflammation. Participates in NK cell receptor activation. Plays a role in NK cell maturation and cytokine production. Together with PIK3CG is involved in neutrophil chemotaxis and extravasation. Together with PIK3CG participates in neutrophil respiratory burst. Plays important roles in mast-cell development and mast cell mediated allergic response. Involved in stem cell factor (SCF)-mediated proliferation, adhesion and migration. Required for allergen-IgE-induced degranulation and cytokine release. The lipid kinase activity is required for its biological function. Isoform 2 may be involved in stabilizing total RAS levels, resulting in increased ERK phosphorylation and increased PI3K activity. The protein is Phosphatidylinositol 4,5-bisphosphate 3-kinase catalytic subunit delta isoform (PIK3CD) of Homo sapiens (Human).